The sequence spans 397 residues: Subtilisin-like protease 3 (397 aa).

The N-terminal stretch at Met1–Ala19 is a signal peptide. Positions Arg20–Ala116 are excised as a propeptide. Residues Ser35 to Ala116 enclose the Inhibitor I9 domain. The 272-residue stretch at Thr126–Arg397 folds into the Peptidase S8 domain. Active-site charge relay system residues include Asp158 and His189. A glycan (N-linked (GlcNAc...) asparagine) is linked at Asn250. Ser344 functions as the Charge relay system in the catalytic mechanism. Residue Asn393 is glycosylated (N-linked (GlcNAc...) asparagine).

The protein belongs to the peptidase S8 family.

The protein localises to the secreted. Secreted subtilisin-like serine protease with keratinolytic activity that contributes to pathogenicity. The polypeptide is Subtilisin-like protease 3 (SUB3) (Arthroderma benhamiae (strain ATCC MYA-4681 / CBS 112371) (Trichophyton mentagrophytes)).